The sequence spans 457 residues: tRNA modification GTPase MnmE (457 aa).

Arginine 25, glutamate 87, and arginine 126 together coordinate (6S)-5-formyl-5,6,7,8-tetrahydrofolate. Residues 223 to 377 form the TrmE-type G domain; that stretch reads GISTAIIGRP…IEERINQLFF (155 aa). Asparagine 233 contributes to the K(+) binding site. GTP contacts are provided by residues 233-238, 252-258, and 277-280; these read NVGKSS, TDIAGTT, and DTAG. Serine 237 lines the Mg(2+) pocket. Positions 252, 254, and 257 each coordinate K(+). Residue threonine 258 participates in Mg(2+) binding. Lysine 457 lines the (6S)-5-formyl-5,6,7,8-tetrahydrofolate pocket.

Belongs to the TRAFAC class TrmE-Era-EngA-EngB-Septin-like GTPase superfamily. TrmE GTPase family. In terms of assembly, homodimer. Heterotetramer of two MnmE and two MnmG subunits. K(+) serves as cofactor.

It localises to the cytoplasm. Exhibits a very high intrinsic GTPase hydrolysis rate. Involved in the addition of a carboxymethylaminomethyl (cmnm) group at the wobble position (U34) of certain tRNAs, forming tRNA-cmnm(5)s(2)U34. In Streptococcus gordonii (strain Challis / ATCC 35105 / BCRC 15272 / CH1 / DL1 / V288), this protein is tRNA modification GTPase MnmE.